A 731-amino-acid polypeptide reads, in one-letter code: 1,4-alpha-glucan branching enzyme GlgB (731 aa).

The active-site Nucleophile is Asp-411. Glu-464 (proton donor) is an active-site residue.

This sequence belongs to the glycosyl hydrolase 13 family. GlgB subfamily. In terms of assembly, monomer.

It catalyses the reaction Transfers a segment of a (1-&gt;4)-alpha-D-glucan chain to a primary hydroxy group in a similar glucan chain.. It participates in glycan biosynthesis; glycogen biosynthesis. Functionally, catalyzes the formation of the alpha-1,6-glucosidic linkages in glycogen by scission of a 1,4-alpha-linked oligosaccharide from growing alpha-1,4-glucan chains and the subsequent attachment of the oligosaccharide to the alpha-1,6 position. The polypeptide is 1,4-alpha-glucan branching enzyme GlgB (Mycobacterium tuberculosis (strain ATCC 25177 / H37Ra)).